The primary structure comprises 329 residues: Ferredoxin--NADP reductase 2 (329 aa).

FAD-binding residues include Thr18, Glu37, Gln45, Tyr50, Val90, Phe124, Asp285, and Ser326.

It belongs to the ferredoxin--NADP reductase type 2 family. As to quaternary structure, homodimer. Requires FAD as cofactor.

It catalyses the reaction 2 reduced [2Fe-2S]-[ferredoxin] + NADP(+) + H(+) = 2 oxidized [2Fe-2S]-[ferredoxin] + NADPH. The sequence is that of Ferredoxin--NADP reductase 2 from Bacillus cytotoxicus (strain DSM 22905 / CIP 110041 / 391-98 / NVH 391-98).